The sequence spans 242 residues: Sugar fermentation stimulation protein homolog (242 aa).

Belongs to the SfsA family.

This Nitratidesulfovibrio vulgaris (strain DP4) (Desulfovibrio vulgaris) protein is Sugar fermentation stimulation protein homolog.